The chain runs to 470 residues: 6-phospho-beta-galactosidase (470 aa).

5 residues coordinate D-galactose 6-phosphate: Gln19, His116, Asn159, Glu160, and Asn297. Glu160 (proton donor) is an active-site residue. Glu375 (nucleophile) is an active-site residue. D-galactose 6-phosphate-binding residues include Ser430, Trp431, Lys437, and Tyr439.

The protein belongs to the glycosyl hydrolase 1 family.

It catalyses the reaction a 6-phospho-beta-D-galactoside + H2O = D-galactose 6-phosphate + an alcohol. It functions in the pathway carbohydrate metabolism; lactose degradation; D-galactose 6-phosphate and beta-D-glucose from lactose 6-phosphate: step 1/1. The protein is 6-phospho-beta-galactosidase of Staphylococcus aureus (strain MRSA252).